Here is a 295-residue protein sequence, read N- to C-terminus: Probable aspartoacylase (295 aa).

Zn(2+)-binding residues include His13 and Glu16. Substrate contacts are provided by residues Arg54 and 61-62 (NR). Residue His100 coordinates Zn(2+). Substrate is bound by residues Glu158 and Tyr268.

The protein belongs to the AspA/AstE family. Aspartoacylase subfamily. Zn(2+) is required as a cofactor.

It catalyses the reaction an N-acyl-L-aspartate + H2O = a carboxylate + L-aspartate. This is Probable aspartoacylase from Prochlorococcus marinus subsp. pastoris (strain CCMP1986 / NIES-2087 / MED4).